The following is a 205-amino-acid chain: Urease accessory protein UreG (205 aa).

Residue 10 to 17 (GPVGSGKT) coordinates GTP.

This sequence belongs to the SIMIBI class G3E GTPase family. UreG subfamily. As to quaternary structure, homodimer. UreD, UreF and UreG form a complex that acts as a GTP-hydrolysis-dependent molecular chaperone, activating the urease apoprotein by helping to assemble the nickel containing metallocenter of UreC. The UreE protein probably delivers the nickel.

Its subcellular location is the cytoplasm. Its function is as follows. Facilitates the functional incorporation of the urease nickel metallocenter. This process requires GTP hydrolysis, probably effectuated by UreG. The polypeptide is Urease accessory protein UreG (Corynebacterium urealyticum (strain ATCC 43042 / DSM 7109)).